We begin with the raw amino-acid sequence, 476 residues long: Sulfate adenylyltransferase subunit 1 (476 aa).

Residues 24 to 238 (KSLLRFLTCG…ELLEYVDIDR (215 aa)) enclose the tr-type G domain. The interval 33 to 40 (GSVDDGKS) is G1. 33 to 40 (GSVDDGKS) lines the GTP pocket. The tract at residues 91-95 (GITID) is G2. Positions 112 to 115 (DTPG) are G3. Residues 112–116 (DTPGH) and 167–170 (NKMD) each bind GTP. A G4 region spans residues 167–170 (NKMD). Positions 205 to 207 (SAL) are G5.

It belongs to the TRAFAC class translation factor GTPase superfamily. Classic translation factor GTPase family. CysN/NodQ subfamily. Heterodimer composed of CysD, the smaller subunit, and CysN.

It carries out the reaction sulfate + ATP + H(+) = adenosine 5'-phosphosulfate + diphosphate. Its pathway is sulfur metabolism; hydrogen sulfide biosynthesis; sulfite from sulfate: step 1/3. In terms of biological role, with CysD forms the ATP sulfurylase (ATPS) that catalyzes the adenylation of sulfate producing adenosine 5'-phosphosulfate (APS) and diphosphate, the first enzymatic step in sulfur assimilation pathway. APS synthesis involves the formation of a high-energy phosphoric-sulfuric acid anhydride bond driven by GTP hydrolysis by CysN coupled to ATP hydrolysis by CysD. This chain is Sulfate adenylyltransferase subunit 1, found in Vibrio cholerae serotype O1 (strain M66-2).